The following is a 130-amino-acid chain: Large ribosomal subunit protein bL12 (130 aa).

The protein belongs to the bacterial ribosomal protein bL12 family. As to quaternary structure, homodimer. Part of the ribosomal stalk of the 50S ribosomal subunit. Forms a multimeric L10(L12)X complex, where L10 forms an elongated spine to which 2 to 4 L12 dimers bind in a sequential fashion. Binds GTP-bound translation factors.

Forms part of the ribosomal stalk which helps the ribosome interact with GTP-bound translation factors. Is thus essential for accurate translation. The chain is Large ribosomal subunit protein bL12 from Mycolicibacterium vanbaalenii (strain DSM 7251 / JCM 13017 / BCRC 16820 / KCTC 9966 / NRRL B-24157 / PYR-1) (Mycobacterium vanbaalenii).